The primary structure comprises 1438 residues: DNA polymerase III PolC-type (1438 aa).

The 157-residue stretch at 422-578 (YVVFDVETTG…YDTEATAYIF (157 aa)) folds into the Exonuclease domain.

This sequence belongs to the DNA polymerase type-C family. PolC subfamily.

Its subcellular location is the cytoplasm. It catalyses the reaction DNA(n) + a 2'-deoxyribonucleoside 5'-triphosphate = DNA(n+1) + diphosphate. Its function is as follows. Required for replicative DNA synthesis. This DNA polymerase also exhibits 3' to 5' exonuclease activity. The polypeptide is DNA polymerase III PolC-type (Staphylococcus aureus (strain Mu3 / ATCC 700698)).